Reading from the N-terminus, the 524-residue chain is REH2-associated factor 1 (524 aa).

The transit peptide at 1–22 directs the protein to the mitochondrion; it reads MRRWLVASMAPQLHQLLQPVRR. The C2H2-type 1; atypical zinc-finger motif lies at 48–70; it reads ASCPACSRVVHMCDMLTHLITAH. The C2H2-type 2; atypical zinc finger occupies 121–147; it reads YMCNWCDRRSDVYATRDKFLKHVADVH. Residues 226-249 form a C2H2-type 4 zinc finger; sequence FPCELCNRTFNSEIDLLQHLETRH. A C2H2-type 3; atypical zinc finger spans residues 286–312; that stretch reads VICDLCVSSSKVYKMPSALFSHIRFKH. C2H2-type zinc fingers lie at residues 334–357, 376–399, 406–429, and 443–465; these read FVCT…NSKH, WWCH…QNKH, HPCP…SLQH, and VKCS…AVKH. Positions 463-524 are disordered; that stretch reads VKHHKKDPRA…KTTEVSEVTS (62 aa). Over residues 479–500 the composition is skewed to low complexity; the sequence is APTSASHVAASTSAAVPSEVEA.

Component of the REH2-associated complex (REH2C) composed of helicase REH2, associated factors H2F1 and H2F2, and mRNAs at various editing stages; the formation of the complex is RNA-independent. Within the complex, interacts with REH2; the interaction is direct. Interacts with various editing complexes including the RNA editing core (RECC) complex, the gRNA-binding (GRBC) complex (also known as the MRB1 complex) and the RNA editing mediator (REMC) complex.

It localises to the mitochondrion. Functionally, plays an important role in mitochondrial mRNA editing by promoting the assembly of the mRNA editosome. Facilitates the recruitment of mRNA to the REH2C complex and promotes the interaction between various editing complexes including REH2C, GRBC, REMC and RECC complexes. The chain is REH2-associated factor 1 from Trypanosoma brucei brucei (strain 927/4 GUTat10.1).